Consider the following 274-residue polypeptide: Undecaprenyl-diphosphatase (274 aa).

Helical transmembrane passes span 9–29, 47–67, 95–115, 120–140, 161–181, 197–217, 224–244, and 254–274; these read LEYL…FIPV, PGAS…AWYF, ILIG…FVPY, VLRS…FMYL, LIGF…GITI, FSFL…FISS, LGFF…LLAI, and NGLK…LLNL.

This sequence belongs to the UppP family.

It localises to the cell inner membrane. It carries out the reaction di-trans,octa-cis-undecaprenyl diphosphate + H2O = di-trans,octa-cis-undecaprenyl phosphate + phosphate + H(+). Catalyzes the dephosphorylation of undecaprenyl diphosphate (UPP). Confers resistance to bacitracin. This is Undecaprenyl-diphosphatase from Prochlorococcus marinus (strain AS9601).